Here is a 438-residue protein sequence, read N- to C-terminus: (S)-3,5-dihydroxyphenylglycine transaminase (438 aa).

An N6-(pyridoxal phosphate)lysine modification is found at Lys266.

The protein belongs to the class-I pyridoxal-phosphate-dependent aminotransferase family. It depends on pyridoxal 5'-phosphate as a cofactor.

It catalyses the reaction (S)-3,5-dihydroxyphenylglycine + 2-oxoglutarate = 2-(3,5-dihydroxyphenyl)-2-oxoacetate + L-glutamate. Its pathway is antibiotic biosynthesis; vancomycin biosynthesis. Its function is as follows. Catalyzes the transamination of p-hydroxybenzoylformate to L-p-hydroxyphenylglycine as part of the biosynthesis of the (S)-3,5-dihydroxyphenylglycine constituent of the glycopeptide antibiotic chloroeremomycin, a member of the vancomycin group of antibiotics. This chain is (S)-3,5-dihydroxyphenylglycine transaminase (hpgT), found in Amycolatopsis orientalis (Nocardia orientalis).